The following is a 911-amino-acid chain: DNA mismatch repair protein MutS (911 aa).

Residues 1–10 (MDNKTDHKND) show a composition bias toward basic and acidic residues. The tract at residues 1–24 (MDNKTDHKNDLNSQPVPSSAPHKE) is disordered. 662 to 669 (GPNMGGKS) lines the ATP pocket.

It belongs to the DNA mismatch repair MutS family.

Functionally, this protein is involved in the repair of mismatches in DNA. It is possible that it carries out the mismatch recognition step. This protein has a weak ATPase activity. The polypeptide is DNA mismatch repair protein MutS (Bartonella quintana (strain Toulouse) (Rochalimaea quintana)).